The following is a 421-amino-acid chain: F-box protein At2g17690 (421 aa).

The F-box domain maps to 2 to 50; the sequence is GDWSKLPEELLGLIALRLYSVIELIRFRSICKSWRSSASGVNKNHSLSS.

Its function is as follows. Involved in heat stress response. Contributes to recovery from heat stress. The polypeptide is F-box protein At2g17690 (Arabidopsis thaliana (Mouse-ear cress)).